A 237-amino-acid chain; its full sequence is Uridylate kinase (237 aa).

13-16 (KLSG) is a binding site for ATP. Position 53 (Gly-53) interacts with UMP. Residues Gly-54 and Arg-58 each coordinate ATP. UMP is bound by residues Asp-73 and 134–141 (AGLPYFST). Residues Asn-162, Tyr-168, and Asp-171 each contribute to the ATP site.

It belongs to the UMP kinase family. As to quaternary structure, homohexamer.

The protein resides in the cytoplasm. It carries out the reaction UMP + ATP = UDP + ADP. The protein operates within pyrimidine metabolism; CTP biosynthesis via de novo pathway; UDP from UMP (UMPK route): step 1/1. With respect to regulation, inhibited by UTP. Functionally, catalyzes the reversible phosphorylation of UMP to UDP. The chain is Uridylate kinase from Leifsonia xyli subsp. xyli (strain CTCB07).